Consider the following 359-residue polypeptide: Mineralocorticoid receptor (359 aa).

A DNA-binding region (nuclear receptor) is located at residues 1–49 (FKRAVEGQHNYLCAGRNDCIIDKIRRKNCPACRVRKCLQAGMNLGARKS). Zn(2+)-binding residues include Cys13, Cys19, Cys29, and Cys32. An NR C4-type zinc finger spans residues 13-37 (CAGRNDCIIDKIRRKNCPACRVRKC). Positions 48-96 (KSKKPGKLKGVNEDSTPTKEGGQTCPGSGGGYLSSGEKELSTSPTNALV) are disordered. Positions 50–107 (KKPGKLKGVNEDSTPTKEGGQTCPGSGGGYLSSGEKELSTSPTNALVPHGPGGGLVTP) are hinge. The NR LBD domain occupies 108–339 (YLPPSICSVL…EFPEMLVEII (232 aa)). The 21-hydroxyprogesterone site is built by Asn145 and Gln151. Aldosterone-binding residues include Asn145 and Gln151. Residues Asn145 and Gln151 each coordinate progesterone. The tract at residues 157 to 160 (KWAK) is important for coactivator binding. 21-hydroxyprogesterone contacts are provided by Arg192 and Thr320. Residues Arg192 and Thr320 each contribute to the aldosterone site. 2 residues coordinate progesterone: Arg192 and Thr320.

The protein belongs to the nuclear hormone receptor family. NR3 subfamily.

It is found in the cytoplasm. Its subcellular location is the nucleus. Its function is as follows. Receptor for both mineralocorticoids (MC) such as cortisol. Binds to mineralocorticoid response elements (MRE) and transactivates target genes. The effect of MC is to increase ion and water transport and thus raise extracellular fluid volume and blood pressure and lower potassium levels. This chain is Mineralocorticoid receptor (nr3c2), found in Oncorhynchus mykiss (Rainbow trout).